The following is a 453-amino-acid chain: Glutamyl-tRNA(Gln) amidotransferase subunit A (453 aa).

Active-site charge relay system residues include Lys56 and Ser131. The active-site Acyl-ester intermediate is the Ser155.

This sequence belongs to the amidase family. GatA subfamily. As to quaternary structure, heterotrimer of A, B and C subunits.

It catalyses the reaction L-glutamyl-tRNA(Gln) + L-glutamine + ATP + H2O = L-glutaminyl-tRNA(Gln) + L-glutamate + ADP + phosphate + H(+). In terms of biological role, allows the formation of correctly charged Gln-tRNA(Gln) through the transamidation of misacylated Glu-tRNA(Gln) in organisms which lack glutaminyl-tRNA synthetase. The reaction takes place in the presence of glutamine and ATP through an activated gamma-phospho-Glu-tRNA(Gln). The protein is Glutamyl-tRNA(Gln) amidotransferase subunit A of Campylobacter fetus subsp. fetus (strain 82-40).